The primary structure comprises 1246 residues: Superkiller complex protein 2 (1246 aa).

Residues 220–246 (LGGGDEDENEAVGQPGGPRGDTVSASP) form a disordered region. 2 positions are modified to phosphoserine: serine 245 and serine 256. One can recognise a Helicase ATP-binding domain in the interval 319 to 475 (ILHLERHDSV…WIGRLKRRQI (157 aa)). 332–339 (AHTSAGKT) contributes to the ATP binding site. Positions 423–426 (DEVH) match the DEVH box motif. The region spanning 585–755 (GLTSLDLTTS…LTYTMILNLL (171 aa)) is the Helicase C-terminal domain.

The protein belongs to the helicase family. SKI2 subfamily. As to quaternary structure, component of the SKI complex which consists of SKIC2, SKIC3 and SKIC8. Interacts with HBS1L isoform 2.

It is found in the nucleus. Its subcellular location is the cytoplasm. The catalysed reaction is ATP + H2O = ADP + phosphate + H(+). Its function is as follows. Helicase component of the SKI complex, a multiprotein complex that assists the RNA-degrading exosome during the mRNA decay and quality-control pathways. The SKI complex catalyzes mRNA extraction from 80S ribosomal complexes in the 3'-5' direction and channels mRNA to the cytosolic exosome for degradation. SKI-mediated extraction of mRNA from stalled ribosomes allow binding of the Pelota-HBS1L complex and subsequent ribosome disassembly by ABCE1 for ribosome recycling. In the nucleus, the SKI complex associates with transcriptionally active genes in a manner dependent on PAF1 complex (PAF1C). The polypeptide is Superkiller complex protein 2 (Homo sapiens (Human)).